The following is a 684-amino-acid chain: Divalent metal transporter 1 (684 aa).

Over M1–K228 the chain is Cytoplasmic. The interval N153 to K195 is disordered. The span at N156 to V191 shows a compositional bias: low complexity. Residues L229–L247 traverse the membrane as a helical segment. Over D248–Y275 the chain is Vacuolar. The chain crosses the membrane as a helical span at residues Y276–G299. The Cytoplasmic portion of the chain corresponds to H300 to S319. The chain crosses the membrane as a helical span at residues T320–L345. At N346–G350 the chain is on the vacuolar side. Residues I351–L370 form a helical membrane-spanning segment. Topologically, residues E371–V381 are cytoplasmic. The chain crosses the membrane as a helical span at residues L382–F404. Topologically, residues K405–D423 are vacuolar. The helical transmembrane segment at A424–A445 threads the bilayer. Topologically, residues K446 to T465 are cytoplasmic. The helical transmembrane segment at I466–A487 threads the bilayer. Over E488 to K515 the chain is Vacuolar. A helical membrane pass occupies residues I516–F534. Residues M535–T554 lie on the Cytoplasmic side of the membrane. The chain crosses the membrane as a helical span at residues F555 to L573. Topologically, residues T574–T584 are vacuolar. Residues N585 to Y603 form a helical membrane-spanning segment. Residues R604–K622 lie on the Cytoplasmic side of the membrane. Residues F623–V645 form a helical membrane-spanning segment. Residues H646–S650 are Vacuolar-facing. The helical transmembrane segment at L651–N673 threads the bilayer. Over I674–N684 the chain is Cytoplasmic.

The protein belongs to the NRAMP (TC 2.A.55) family.

The protein resides in the vacuole membrane. The enzyme catalyses Fe(2+)(in) = Fe(2+)(out). Iron transporter. Required for parasite development during the blood stages. Required for apicoplast biogenesis. Required for mitochondrial polarization. In Plasmodium falciparum (isolate 3D7), this protein is Divalent metal transporter 1.